The chain runs to 390 residues: Leu/Ile/Val-binding protein homolog 6 (390 aa).

A signal peptide spans 1-21 (MKKIALTALAVFSLAASAAYA).

It belongs to the leucine-binding protein family.

Functionally, component of an amino-acid transport system. This Brucella suis biovar 1 (strain 1330) protein is Leu/Ile/Val-binding protein homolog 6.